We begin with the raw amino-acid sequence, 227 residues long: MELVFIRHGQSEWNAKNLFTGWRDVKLSEQGLAEAAAAGKKLKENGYEFDIAFTSVLTRAIKTCNIVLEESDQLFVPQIKTWRLNERHYGQLQGLDKKQTAEQYGDEQVRIWRRSYDTLPPLLDKDDEFSAHKDRRYAHLPADVVPDGENLKVTLERVLPFWEDQIAPAILSGKRVLVAAHGNSLRALAKHIEGISDKDIMGLEIPTGQPLVYKLDDNLKVLEKFYL.

Substrate-binding positions include 7–14, 20–21, R59, 86–89, K97, 113–114, and 182–183; these read RHGQSEWN, TG, ERHY, RR, and GN. Catalysis depends on H8, which acts as the Tele-phosphohistidine intermediate. E86 acts as the Proton donor/acceptor in catalysis.

Belongs to the phosphoglycerate mutase family. BPG-dependent PGAM subfamily. As to quaternary structure, homodimer.

It carries out the reaction (2R)-2-phosphoglycerate = (2R)-3-phosphoglycerate. Its pathway is carbohydrate degradation; glycolysis; pyruvate from D-glyceraldehyde 3-phosphate: step 3/5. Functionally, catalyzes the interconversion of 2-phosphoglycerate and 3-phosphoglycerate. In Neisseria meningitidis serogroup C / serotype 2a (strain ATCC 700532 / DSM 15464 / FAM18), this protein is 2,3-bisphosphoglycerate-dependent phosphoglycerate mutase.